We begin with the raw amino-acid sequence, 341 residues long: MPKPNHSTAPLPFPILIGDIGGTNARFSILTDAYAEPKQFPNVRTADFATIDEAIQQGVLDKTAVQPRSAILAVAGPINDDEIPLTNCDWVVRPKTMIEGLGMEDVLVVNDFEAQALAVAALSDENRERIGEATGDMIASRVVLGPGTGLGVGGLVHAQHSWIPVPGEGGHVDLGPRSKRDYQIFPHIETIEGRVSAEQILCGRGLVNLYHAICVVDGIQPTMKDPADITSHALAGSDKAAVETVSLFATYLGRVAGDMAMVFMARGGVYLSGGISQKILPALRRPEFRLAFEDKAPHTALLRTIPTYVVTHPLAALAGLSSYARMPANFGVSTEGRRWRR.

Position 18–23 (18–23 (GDIGGT)) interacts with ATP.

Belongs to the bacterial glucokinase family.

The protein resides in the cytoplasm. It catalyses the reaction D-glucose + ATP = D-glucose 6-phosphate + ADP + H(+). The polypeptide is Glucokinase (Rhizobium leguminosarum bv. trifolii (strain WSM2304)).